A 329-amino-acid polypeptide reads, in one-letter code: Cathepsin K (329 aa).

The first 15 residues, 1-15 (MWGLKVLLLPVMSFA), serve as a signal peptide directing secretion. The propeptide at 16 to 114 (LYPEEILDTH…TLYIPDWEGR (99 aa)) is activation peptide. Residue N103 is glycosylated (N-linked (GlcNAc...) asparagine). 3 disulfides stabilise this stretch: C136–C177, C170–C210, and C269–C318. The active site involves C139. Active-site residues include H276 and N296.

It belongs to the peptidase C1 family.

The protein resides in the lysosome. Its subcellular location is the secreted. It is found in the apical cell membrane. It catalyses the reaction Broad proteolytic activity. With small-molecule substrates and inhibitors, the major determinant of specificity is P2, which is preferably Leu, Met &gt; Phe, and not Arg.. In terms of biological role, thiol protease involved in osteoclastic bone resorption and may participate partially in the disorder of bone remodeling. Displays potent endoprotease activity against fibrinogen at acid pH. May play an important role in extracellular matrix degradation. Involved in the release of thyroid hormone thyroxine (T4) by limited proteolysis of TG/thyroglobulin in the thyroid follicle lumen. The protein is Cathepsin K (CTSK) of Macaca fascicularis (Crab-eating macaque).